We begin with the raw amino-acid sequence, 837 residues long: GRIP1-associated protein 1 (837 aa).

At Ala2 the chain carries N-acetylalanine. Residues 4 to 158 adopt a coiled-coil conformation; the sequence is ALSEEEFQRM…ALQERYGKEA (155 aa). 4 disordered regions span residues 161-180, 555-577, 647-666, and 677-702; these read PSAV…PISL, KGKE…ERDG, SEMN…VSSF, and SSAI…LSDE. The stretch at 204–637 forms a coiled coil; sequence EQLQGLESSK…LQEILTNSKS (434 aa). Residues 648-666 show a composition bias toward polar residues; that stretch reads EMNSPSRTQTGDSSSVSSF. 8 positions are modified to phosphoserine: Ser651, Ser662, Ser664, Ser665, Ser684, Ser686, Ser687, and Ser688. The segment covering 678–690 has biased composition (low complexity); it reads SAIPARSLSSSPQ. 2 coiled-coil regions span residues 697–731 and 781–810; these read AELS…LEVS and DENL…KDME. At Ser826 the chain carries Phosphoserine.

Interacts with GRIP1, GRIP2 and AMPA receptors. Interacts (via C-terminus) with MAPK8/JNK1 and with MAP3K1/MEKK1; the interaction promotes MAP3K1-mediated phosphorylation of MAPK8. Interacts (via N-terminus) with RAB4A (in GTP-bound form). Interacts (via C-terminus) with STX12. Post-translationally, proteolytically cleaved by caspase-3. A minor C-terminal proteolytic fragment of 30 kDa is produced. Proteolytic cleavage is required for JNK signaling activation. In terms of tissue distribution, expressed in the central nervous system; especially in neurons.

It localises to the early endosome membrane. The protein localises to the recycling endosome membrane. It is found in the cell projection. The protein resides in the axon. Its subcellular location is the dendrite. It localises to the synapse. Regulates the endosomal recycling back to the neuronal plasma membrane, possibly by connecting early and late recycling endosomal domains and promoting segregation of recycling endosomes from early endosomal membranes. Involved in the localization of recycling endosomes to dendritic spines, thereby playing a role in the maintenance of dendritic spine morphology. Required for the activity-induced AMPA receptor recycling to dendrite membranes and for long-term potentiation and synaptic plasticity. Functionally, functions as a scaffold protein in neurons to facilitate MAP3K1/MEKK1-mediated activation of the JNK1 kinase by phosphorylation, possibly by bringing MAP3K1/MEKK1 and JNK1 in close proximity. In Rattus norvegicus (Rat), this protein is GRIP1-associated protein 1 (Gripap1).